We begin with the raw amino-acid sequence, 116 residues long: U16-barytoxin-Tl1b (116 aa).

Positions 1 to 20 (MKTIIVFLSLLVLATKFGDA) are cleaved as a signal peptide. The propeptide occupies 21–74 (KEGVNQKQKKEVTQNEFREEYLNEMAAMSLVQQLEAIERALFENEAGRNSRQKR). Disulfide bonds link cysteine 75-cysteine 90, cysteine 82-cysteine 95, and cysteine 89-cysteine 110.

This sequence belongs to the neurotoxin 14 (magi-1) family. 06 (ICK-Trit) subfamily. Expressed by the venom gland.

It localises to the secreted. In terms of biological role, ion channel inhibitor. This Trittame loki (Brush-footed trapdoor spider) protein is U16-barytoxin-Tl1b.